A 162-amino-acid chain; its full sequence is Phenazine biosynthesis protein PhzB1 (162 aa).

Belongs to the PhzA/PhzB family. As to quaternary structure, homodimer.

It participates in antibiotic biosynthesis; phenazine biosynthesis. Functionally, involved in the biosynthesis of the antibiotic phenazine, a nitrogen-containing heterocyclic molecule. PhzB1 (operon phzA1B1C1E1F1G1) has a role in the biosynthesis of the phenazine during planktonic growth. In Pseudomonas aeruginosa (strain ATCC 15692 / DSM 22644 / CIP 104116 / JCM 14847 / LMG 12228 / 1C / PRS 101 / PAO1), this protein is Phenazine biosynthesis protein PhzB1.